The following is a 290-amino-acid chain: Bifunctional protein FolD 1 (290 aa).

Residues 164 to 166 (GRS), Ile-193, and Ile-236 contribute to the NADP(+) site.

Belongs to the tetrahydrofolate dehydrogenase/cyclohydrolase family. Homodimer.

It catalyses the reaction (6R)-5,10-methylene-5,6,7,8-tetrahydrofolate + NADP(+) = (6R)-5,10-methenyltetrahydrofolate + NADPH. The enzyme catalyses (6R)-5,10-methenyltetrahydrofolate + H2O = (6R)-10-formyltetrahydrofolate + H(+). It functions in the pathway one-carbon metabolism; tetrahydrofolate interconversion. Its function is as follows. Catalyzes the oxidation of 5,10-methylenetetrahydrofolate to 5,10-methenyltetrahydrofolate and then the hydrolysis of 5,10-methenyltetrahydrofolate to 10-formyltetrahydrofolate. In Geobacter metallireducens (strain ATCC 53774 / DSM 7210 / GS-15), this protein is Bifunctional protein FolD 1.